Reading from the N-terminus, the 760-residue chain is Phosphoribosylformylglycinamidine synthase subunit PurL (760 aa).

The segment at 1 to 25 is disordered; the sequence is MNMSLPADRDTAKKPSAQKPSAHAQ. The active site involves H69. Y72 and K115 together coordinate ATP. Residue E117 participates in Mg(2+) binding. Residues 118-121 and R140 each bind substrate; that span reads SHNH. The active-site Proton acceptor is the H119. D141 contributes to the Mg(2+) binding site. Q265 is a substrate binding site. Residue D293 coordinates Mg(2+). Residue 337-339 participates in substrate binding; that stretch reads ESQ. ATP-binding residues include N519 and G556. A Mg(2+)-binding site is contributed by N557. S559 provides a ligand contact to substrate.

This sequence belongs to the FGAMS family. As to quaternary structure, monomer. Part of the FGAM synthase complex composed of 1 PurL, 1 PurQ and 2 PurS subunits.

Its subcellular location is the cytoplasm. The enzyme catalyses N(2)-formyl-N(1)-(5-phospho-beta-D-ribosyl)glycinamide + L-glutamine + ATP + H2O = 2-formamido-N(1)-(5-O-phospho-beta-D-ribosyl)acetamidine + L-glutamate + ADP + phosphate + H(+). It participates in purine metabolism; IMP biosynthesis via de novo pathway; 5-amino-1-(5-phospho-D-ribosyl)imidazole from N(2)-formyl-N(1)-(5-phospho-D-ribosyl)glycinamide: step 1/2. Part of the phosphoribosylformylglycinamidine synthase complex involved in the purines biosynthetic pathway. Catalyzes the ATP-dependent conversion of formylglycinamide ribonucleotide (FGAR) and glutamine to yield formylglycinamidine ribonucleotide (FGAM) and glutamate. The FGAM synthase complex is composed of three subunits. PurQ produces an ammonia molecule by converting glutamine to glutamate. PurL transfers the ammonia molecule to FGAR to form FGAM in an ATP-dependent manner. PurS interacts with PurQ and PurL and is thought to assist in the transfer of the ammonia molecule from PurQ to PurL. The protein is Phosphoribosylformylglycinamidine synthase subunit PurL of Tropheryma whipplei (strain TW08/27) (Whipple's bacillus).